A 143-amino-acid chain; its full sequence is Large ribosomal subunit protein uL11 (143 aa).

The protein belongs to the universal ribosomal protein uL11 family. Part of the ribosomal stalk of the 50S ribosomal subunit. Interacts with L10 and the large rRNA to form the base of the stalk. L10 forms an elongated spine to which L12 dimers bind in a sequential fashion forming a multimeric L10(L12)X complex. In terms of processing, one or more lysine residues are methylated.

Functionally, forms part of the ribosomal stalk which helps the ribosome interact with GTP-bound translation factors. This chain is Large ribosomal subunit protein uL11, found in Kineococcus radiotolerans (strain ATCC BAA-149 / DSM 14245 / SRS30216).